We begin with the raw amino-acid sequence, 350 residues long: Phosphotriesterase-related protein (350 aa).

A divalent metal cation contacts are provided by His-22, His-24, Glu-169, His-201, His-230, and Asp-298.

This sequence belongs to the metallo-dependent hydrolases superfamily. Phosphotriesterase family. A divalent metal cation serves as cofactor.

This Drosophila erecta (Fruit fly) protein is Phosphotriesterase-related protein.